Consider the following 665-residue polypeptide: Translation factor guf1, mitochondrial (665 aa).

The N-terminal 40 residues, 1-40, are a transit peptide targeting the mitochondrion; it reads MRGCLQLARWLSAAPTRPAASHWPGLCAAPRFFSHSAILR. Residues 67 to 247 enclose the tr-type G domain; it reads ERYRNFCIVA…TVVDKIPAPI (181 aa). Residues 76 to 83, 140 to 144, and 194 to 197 each bind GTP; these read AHVDHGKS, DTPGH, and NKVD.

The protein belongs to the TRAFAC class translation factor GTPase superfamily. Classic translation factor GTPase family. LepA subfamily.

Its subcellular location is the mitochondrion inner membrane. It catalyses the reaction GTP + H2O = GDP + phosphate + H(+). Its function is as follows. Promotes mitochondrial protein synthesis. May act as a fidelity factor of the translation reaction, by catalyzing a one-codon backward translocation of tRNAs on improperly translocated ribosomes. Binds to mitochondrial ribosomes in a GTP-dependent manner. This Aspergillus terreus (strain NIH 2624 / FGSC A1156) protein is Translation factor guf1, mitochondrial (guf1).